Consider the following 237-residue polypeptide: Phosphoribosylaminoimidazole-succinocarboxamide synthase (237 aa).

It belongs to the SAICAR synthetase family.

The enzyme catalyses 5-amino-1-(5-phospho-D-ribosyl)imidazole-4-carboxylate + L-aspartate + ATP = (2S)-2-[5-amino-1-(5-phospho-beta-D-ribosyl)imidazole-4-carboxamido]succinate + ADP + phosphate + 2 H(+). The protein operates within purine metabolism; IMP biosynthesis via de novo pathway; 5-amino-1-(5-phospho-D-ribosyl)imidazole-4-carboxamide from 5-amino-1-(5-phospho-D-ribosyl)imidazole-4-carboxylate: step 1/2. The sequence is that of Phosphoribosylaminoimidazole-succinocarboxamide synthase from Methanosarcina acetivorans (strain ATCC 35395 / DSM 2834 / JCM 12185 / C2A).